The primary structure comprises 625 residues: MNVTSIALRAETWLLAAWHVKVPPMWLEACINWIQEENNNVNLSQAQMNKQVFEQWLLTDLRDLEHPLLPDGILEIPKGELNGFYALQINSLVDVSQPAYSQIQKLRGKNTTNDLVTAEAQVTPKPWEAKPSRMLMLQLTDGIVQIQGMEYQPIPILHSDLPPGTKILIYGNISFRLGVLLLKPENVKVLGGEVDALLEEYAQEKVLARLIGEPDLVVSVIPNNSNENIPRVTDVLDPALGPSDEELLASLDENDELTANNDTSSERCFTTGSSSNTIPTRQSSFEPEFVISPRPKEEPSNLSIHVMDGELDDFSLEEALLLEETVQKEQMETKELQPLTFNRNADRSIERFSHNPNTTNNFSLTCKNGNNNWSEKNVSEQMTNEDKSFGCPSVRDQNRSIFSVHCNVPLAHDFTNKEKNLETDNKIKQTSSSDSHSLNNKILNREVVNYVQKRNSQISNENDCNLQSCSLRSSENSINLSIAMDLYSPPFVYLSVLMASKPKEVTTVKVKAFIVTLTGNLSSSGGIWSITAKVSDGTAYLDVDFVDEILTSLIGFSVPEMKQSKKDPLQYQKFLEGLQKCQRDLIDLCCLMTISFNPSLSKAMVLALQDVNMEHLENLKKRLNK.

M1 carries the post-translational modification N-acetylmethionine. S225 carries the phosphoserine modification. The interval 257–282 (LTANNDTSSERCFTTGSSSNTIPTRQ) is disordered. Residues S284 and S292 each carry the phosphoserine modification. Glycyl lysine isopeptide (Lys-Gly) (interchain with G-Cter in SUMO2) cross-links involve residues K334, K387, and K426.

The protein belongs to the RMI1 family. In terms of assembly, component of the RMI complex, containing at least TOP3A, RMI1 and RMI2. The RMI complex interacts with BLM. Directly interacts with RMI2 and TOP3A. May bind DHJ. Interacts (via N-terminal region) with BLM; the interaction is direct.

The protein resides in the nucleus. Essential component of the RMI complex, a complex that plays an important role in the processing of homologous recombination intermediates to limit DNA crossover formation in cells. Promotes TOP3A binding to double Holliday junctions (DHJ) and hence stimulates TOP3A-mediated dissolution. Required for BLM phosphorylation during mitosis. Within the BLM complex, required for BLM and TOP3A stability. This Homo sapiens (Human) protein is RecQ-mediated genome instability protein 1 (RMI1).